The sequence spans 198 residues: Dynein light chain Tctex-type protein 2 (198 aa).

A disordered region spans residues 1–34; that stretch reads MEKRGRGVKSSPIQTPNQTPQQAPVTPRKERRPS. Residues 11–24 show a composition bias toward polar residues; the sequence is SPIQTPNQTPQQAP.

Belongs to the dynein light chain Tctex-type family. Interacts with CCDC159. Interacts with CSNK2B. In terms of tissue distribution, expressed predominantly in testis. Also expressed in brain, lung and trachea.

The protein localises to the cytoplasm. The protein resides in the cytoskeleton. It localises to the cytoplasmic granule. It is found in the membrane. May be an accessory component of axonemal dynein and cytoplasmic dynein 1. Candidate for involvement in male sterility. The polypeptide is Dynein light chain Tctex-type protein 2 (Homo sapiens (Human)).